Reading from the N-terminus, the 934-residue chain is Intimin (934 aa).

The first 39 residues, 1–39 (MITHGCYTRTRHKHKLKKTLIMLSAGLGLFFYVNQNSFA), serve as a signal peptide directing secretion. The peptidoglycan-binding stretch occupies residues 40 to 153 (NGENYFKLGS…KLTKMSPDVT (114 aa)). Residues 40-153 (NGENYFKLGS…KLTKMSPDVT (114 aa)) form a sufficient for homodimerization region. A required for periplasmic localization region spans residues 40 to 212 (NGENYFKLGS…LQAWLQHYGT (173 aa)). Residues 63-112 (LFYTLKTGETVADLSKSQDINLSTIWSLNKHLYSSESEMMKAAPGQQIIL) form the LysM domain. The tract at residues 210 to 411 (YGTAEVNLQS…LYSMQFRYQF (202 aa)) is inverse autotransporter. The tract at residues 402 to 411 (LYSMQFRYQF) is signature sequence for beta-barrel assembly machinery (BAM), which recognizes the unfolded beta-barrel in the periplasm. The segment at 437–449 (LVQRNNNIILEYK) is minimum linker residues necessary for formation of a heat-modifiable beta-barrel. Big-1 domains follow at residues 560 to 653 (VTDF…VIFF) and 660 to 753 (ITEI…VTFF). Residues 747-934 (ATEVTFFDEL…TPNVYAVCVE (188 aa)) form an intimin receptor Tir-binding region. The region spanning 787–833 (ASGGDGTYSWYSENTSIATVDASGKVTLNGKGSVVIKATSGDKQTVS) is the BIG2 domain. Cysteines 858 and 932 form a disulfide.

The protein belongs to the intimin/invasin family. In terms of assembly, homodimer. Interacts with Tir.

The protein localises to the cell outer membrane. In terms of biological role, an inverse autotransporter. Adhesin, which mediates attachment to the human intestine epithelial cells. Necessary for the production of attaching and effacing lesions on infected human tissue culture cells. Anchored to the outer membrane by binding to peptidoglycan (PGN) via its periplasmic domain, thus helping in receptor interactions during host invasion. PGN-binding may also aid in resisting mechanical and chemical stress during transit of the bacterium through the gastrointestinal tract of the host. This Escherichia coli O157:H7 protein is Intimin.